A 643-amino-acid polypeptide reads, in one-letter code: MRCRSLSHFKDDDFAVVSEVVTHKQNHIPVIKGDFVSLPKHVQRFVAEKAELMKPSAIFICDGSQNEADELIARCVERGVLVPLKAYKNNYLCRTDPRDVARVESKTWMITPEKYDSVCHTPEGVKPMMGQWMSPDEFGKELDDRFPGCMAGRTMYVIPYSMGPVGGPLSKIGIELTDSDYVVLCMRIMTRMGEPVLKALAKNNGEFVRCVHSVGQPKPVATKVINHWPCNPEKTIIAHRPAEREIWSFGSGYGGNSLLGKKCFALRIAMNIGYDEGWMAEHMLIMGVTSPKGEERFVAAAFPSACGKTNLAMLEPTIPGWKVRVIGDDIAWMKFGADGRLYAINPEYGFFGVAPGTSHKTNPMAMASFQENTIFTNVAETADGEYFWEGLEHEVKNPKVDMINWLGEPWHIGDESKAAHPNSRFTAPAGQCPIIHPDWEKPEGVPIDAIIFGGRRPEGVPLVFESRSWVHGIFVGACVKSEATAAAEHTGKQVMHDPMAMRPFMGYNFGRYMRHWMKLGQPPHKVPKIFHVNWFRQSADHKFLWPGYGDNIRVIDWILRRCSGDATIAEETPIGFIPKKGTINLEGLPNVNWDELMSIPKSYWLEDMVETKTFFENQVGSDLPPEIAKELEAQTERIKALKE.

Residues R102 and 253 to 255 (YGG) each bind substrate. Mn(2+)-binding residues include K262 and H282. S304 contacts substrate. 305-310 (ACGKTN) is a binding site for GTP. The active site involves C306. D329 contacts Mn(2+). 422-424 (NSR) serves as a coordination point for substrate. Residues R424, R455, and 548 to 551 (YGDN) each bind GTP.

The protein belongs to the phosphoenolpyruvate carboxykinase [GTP] family. As to quaternary structure, monomer. Requires Mn(2+) as cofactor.

It catalyses the reaction oxaloacetate + GTP = phosphoenolpyruvate + GDP + CO2. Functionally, in parasitic nematodes PEPCK carboxylates phosphoenolpyruvate to oxaloacetate thus introducing the products of glycolysis to mitochondrial metabolism. In terms of biological role, catalyzes the conversion of oxaloacetate (OAA) to phosphoenolpyruvate (PEP), the rate-limiting step in the metabolic pathway that produces glucose from lactate and other precursors derived from the citric acid cycle. In Ascaris suum (Pig roundworm), this protein is Phosphoenolpyruvate carboxykinase [GTP] (PEPCK).